Consider the following 162-residue polypeptide: Phosphopantetheine adenylyltransferase (162 aa).

Position 10 (threonine 10) interacts with substrate. ATP contacts are provided by residues 10–11 (TF) and histidine 18. Substrate-binding residues include lysine 42, methionine 74, and arginine 88. Residues 89–91 (GLR), glutamate 99, and 124–130 (YAFLSST) each bind ATP.

Belongs to the bacterial CoaD family. In terms of assembly, homohexamer. It depends on Mg(2+) as a cofactor.

Its subcellular location is the cytoplasm. The enzyme catalyses (R)-4'-phosphopantetheine + ATP + H(+) = 3'-dephospho-CoA + diphosphate. It functions in the pathway cofactor biosynthesis; coenzyme A biosynthesis; CoA from (R)-pantothenate: step 4/5. Functionally, reversibly transfers an adenylyl group from ATP to 4'-phosphopantetheine, yielding dephospho-CoA (dPCoA) and pyrophosphate. This is Phosphopantetheine adenylyltransferase from Aliivibrio salmonicida (strain LFI1238) (Vibrio salmonicida (strain LFI1238)).